The chain runs to 363 residues: tRNA U34 carboxymethyltransferase (363 aa).

Carboxy-S-adenosyl-L-methionine-binding positions include Lys101, Trp134, Lys139, Gly159, 181-183, 221-222, Met237, Tyr241, and Arg356; these read DPS and LE.

This sequence belongs to the class I-like SAM-binding methyltransferase superfamily. CmoB family. In terms of assembly, homotetramer.

The enzyme catalyses carboxy-S-adenosyl-L-methionine + 5-hydroxyuridine(34) in tRNA = 5-carboxymethoxyuridine(34) in tRNA + S-adenosyl-L-homocysteine + H(+). Catalyzes carboxymethyl transfer from carboxy-S-adenosyl-L-methionine (Cx-SAM) to 5-hydroxyuridine (ho5U) to form 5-carboxymethoxyuridine (cmo5U) at position 34 in tRNAs. This Psychrobacter cryohalolentis (strain ATCC BAA-1226 / DSM 17306 / VKM B-2378 / K5) protein is tRNA U34 carboxymethyltransferase.